Here is a 253-residue protein sequence, read N- to C-terminus: Ubiquinone/menaquinone biosynthesis C-methyltransferase UbiE (253 aa).

Residues Thr-76, Asp-97, 125–126 (NA), and Ser-142 contribute to the S-adenosyl-L-methionine site.

The protein belongs to the class I-like SAM-binding methyltransferase superfamily. MenG/UbiE family.

It catalyses the reaction a 2-demethylmenaquinol + S-adenosyl-L-methionine = a menaquinol + S-adenosyl-L-homocysteine + H(+). It carries out the reaction a 2-methoxy-6-(all-trans-polyprenyl)benzene-1,4-diol + S-adenosyl-L-methionine = a 5-methoxy-2-methyl-3-(all-trans-polyprenyl)benzene-1,4-diol + S-adenosyl-L-homocysteine + H(+). The protein operates within quinol/quinone metabolism; menaquinone biosynthesis; menaquinol from 1,4-dihydroxy-2-naphthoate: step 2/2. Its pathway is cofactor biosynthesis; ubiquinone biosynthesis. Functionally, methyltransferase required for the conversion of demethylmenaquinol (DMKH2) to menaquinol (MKH2) and the conversion of 2-polyprenyl-6-methoxy-1,4-benzoquinol (DDMQH2) to 2-polyprenyl-3-methyl-6-methoxy-1,4-benzoquinol (DMQH2). This chain is Ubiquinone/menaquinone biosynthesis C-methyltransferase UbiE, found in Xanthomonas campestris pv. campestris (strain ATCC 33913 / DSM 3586 / NCPPB 528 / LMG 568 / P 25).